A 305-amino-acid chain; its full sequence is MLWAQRKKRKATTETTEDKPAESHRPNDSWIKSHFSRLSEEKLPAYRRVSSCGYSPEGKHGEANTTLHVDTVTTKHGEGGVALHRDSFASKQKISGTSVSKEMQRESGKSPSMENDTWAAVAACTKEIDAKGHHVANSVLQRSPEYHRTGHAESRNISPEDLKALEEVELKLKGNFLTHRETVVAGANQAHTVYNQSHHGNQSHQNHNTYPCHQNNQSRSVHYQGHHPSHLSHQGYPSYSSHQNHPGHPSQQGHSSHSNQQGHLGLSSQQGHPSQSSHQSHQGQPGHPNHQSHSLVNRRNQIYDS.

Residues 1 to 10 show a composition bias toward basic residues; the sequence is MLWAQRKKRK. The disordered stretch occupies residues 1 to 30; the sequence is MLWAQRKKRKATTETTEDKPAESHRPNDSW. Basic and acidic residues predominate over residues 16–27; that stretch reads TEDKPAESHRPN. Ser-39 is subject to Phosphoserine. The segment covering 92-101 has biased composition (polar residues); sequence QKISGTSVSK. The disordered stretch occupies residues 92 to 114; sequence QKISGTSVSKEMQRESGKSPSME. Ser-158 is subject to Phosphoserine. The span at 197 to 208 shows a compositional bias: low complexity; the sequence is SHHGNQSHQNHN. Residues 197 to 305 form a disordered region; it reads SHHGNQSHQN…VNRRNQIYDS (109 aa). Composition is skewed to polar residues over residues 209-221 and 231-244; these read TYPC…SRSV and LSHQ…SHQN. The segment covering 247–293 has biased composition (low complexity); sequence GHPSQQGHSSHSNQQGHLGLSSQQGHPSQSSHQSHQGQPGHPNHQSH. The segment covering 294-305 has biased composition (polar residues); sequence SLVNRRNQIYDS.

This is an uncharacterized protein from Rattus norvegicus (Rat).